We begin with the raw amino-acid sequence, 173 residues long: MDLRKKIRIIDDFPKKGISFKDVTPILKDPKSMKHTTKEITKYLEDKNIDVIVGPEARGFLFGILVAQELDLGFVPVRKPGKLPFKTFSVDYALEYGLDRLEIHSDSIEKGQNVAVVDDLLATGGTVLGVTKLVEKIGGNVSALSFVIELTNLNGRDKLKGYNVQSLVKYDDL.

The protein belongs to the purine/pyrimidine phosphoribosyltransferase family. Homodimer.

Its subcellular location is the cytoplasm. It carries out the reaction AMP + diphosphate = 5-phospho-alpha-D-ribose 1-diphosphate + adenine. Its pathway is purine metabolism; AMP biosynthesis via salvage pathway; AMP from adenine: step 1/1. Functionally, catalyzes a salvage reaction resulting in the formation of AMP, that is energically less costly than de novo synthesis. The protein is Adenine phosphoribosyltransferase of Methanococcus vannielii (strain ATCC 35089 / DSM 1224 / JCM 13029 / OCM 148 / SB).